The following is a 188-amino-acid chain: Nicotinamide/nicotinic acid mononucleotide adenylyltransferase (188 aa).

It belongs to the archaeal NMN adenylyltransferase family.

It catalyses the reaction beta-nicotinamide D-ribonucleotide + ATP + H(+) = diphosphate + NAD(+). It carries out the reaction nicotinate beta-D-ribonucleotide + ATP + H(+) = deamido-NAD(+) + diphosphate. The protein operates within cofactor biosynthesis; NAD(+) biosynthesis; NAD(+) from nicotinamide D-ribonucleotide: step 1/1. It participates in cofactor biosynthesis; NAD(+) biosynthesis; deamido-NAD(+) from nicotinate D-ribonucleotide: step 1/1. Its function is as follows. Dual substrate specificity enzyme that catalyzes the formation of NAD(+) from nicotinamide mononucleotide (NMN) and the formation of deamido-NAD(+) (NaAD) from nicotinate mononucleotide (NaMN). Shows nearly identical catalytic efficiency for both physiological substrates. Plays an essential role in all three routes of NAD biogenesis, de novo synthesis as well as the deamidating and nondeamidating salvage pathways. The chain is Nicotinamide/nicotinic acid mononucleotide adenylyltransferase from Acinetobacter baylyi (strain ATCC 33305 / BD413 / ADP1).